The following is a 390-amino-acid chain: Elongation factor Tu 2 (390 aa).

Positions 10–203 (KPHLNIGTMG…AVDTYVPMPE (194 aa)) constitute a tr-type G domain. A G1 region spans residues 19–26 (GHVDHGKT). Residue 19-26 (GHVDHGKT) coordinates GTP. Thr26 contributes to the Mg(2+) binding site. The segment at 60 to 64 (GITIN) is G2. The segment at 81–84 (DMPG) is G3. GTP contacts are provided by residues 81 to 85 (DMPGH) and 136 to 139 (NKAD). The tract at residues 136–139 (NKAD) is G4. A G5 region spans residues 173 to 175 (SGL).

The protein belongs to the TRAFAC class translation factor GTPase superfamily. Classic translation factor GTPase family. EF-Tu/EF-1A subfamily. In terms of assembly, monomer.

It localises to the cytoplasm. The catalysed reaction is GTP + H2O = GDP + phosphate + H(+). In terms of biological role, GTP hydrolase that promotes the GTP-dependent binding of aminoacyl-tRNA to the A-site of ribosomes during protein biosynthesis. This is Elongation factor Tu 2 from Streptomyces avermitilis (strain ATCC 31267 / DSM 46492 / JCM 5070 / NBRC 14893 / NCIMB 12804 / NRRL 8165 / MA-4680).